Here is a 55-residue protein sequence, read N- to C-terminus: Large ribosomal subunit protein bL33 (55 aa).

The protein belongs to the bacterial ribosomal protein bL33 family.

The polypeptide is Large ribosomal subunit protein bL33 (Caulobacter sp. (strain K31)).